A 611-amino-acid chain; its full sequence is Leukotriene A-4 hydrolase (611 aa).

An N6-acetyllysine modification is found at Lys73. A peptide is bound by residues 135-137 (QCQ) and 267-272 (PYGGME). His296 provides a ligand contact to Zn(2+). Glu297 functions as the Proton acceptor in the catalytic mechanism. Positions 300 and 319 each coordinate Zn(2+). Lys337 bears the N6-acetyllysine mark. Residue Tyr384 is the Proton donor of the active site. Lys414 bears the N6-acetyllysine mark. At Ser416 the chain carries Phosphoserine. 564 to 566 (RMK) is a binding site for a peptide. Position 573 is an N6-acetyllysine (Lys573).

It belongs to the peptidase M1 family. Monomer. Requires Zn(2+) as cofactor. Post-translationally, phosphorylation at Ser-416 inhibits leukotriene-A4 hydrolase activity.

It is found in the cytoplasm. It catalyses the reaction leukotriene A4 + H2O = leukotriene B4. It carries out the reaction (5S,6S)-epoxy-(18R)-hydroxy-(7E,9E,11Z,14Z,16E)-eicosapentaenoate + H2O = resolvin E1. The enzyme catalyses (5S,6S)-epoxy-(18S)-hydroxy-(7E,9E,11Z,14Z,16E)-eicosapentaenoate + H2O = 18S-resolvin E1. The catalysed reaction is Release of the N-terminal residue from a tripeptide.. It functions in the pathway lipid metabolism; leukotriene B4 biosynthesis. Inhibited by bestatin. The epoxide hydrolase activity is restrained by suicide inactivation that involves binding of LTA4 to Tyr-379. 4-(4-benzylphenyl)thiazol-2-amine (ARM1) selectively inhibits the epoxide hydrolase activity. Its function is as follows. Bifunctional zinc metalloenzyme that comprises both epoxide hydrolase (EH) and aminopeptidase activities. Acts as an epoxide hydrolase to catalyze the conversion of LTA4 to the pro-inflammatory mediator leukotriene B4 (LTB4). Also has aminopeptidase activity, with high affinity for N-terminal arginines of various synthetic tripeptides. In addition to its pro-inflammatory EH activity, may also counteract inflammation by its aminopeptidase activity, which inactivates by cleavage another neutrophil attractant, the tripeptide Pro-Gly-Pro (PGP), a bioactive fragment of collagen generated by the action of matrix metalloproteinase-9 (MMP9) and prolylendopeptidase (PREPL). Involved also in the biosynthesis of resolvin E1 and 18S-resolvin E1 from eicosapentaenoic acid, two lipid mediators that show potent anti-inflammatory and pro-resolving actions. The polypeptide is Leukotriene A-4 hydrolase (Lta4h) (Mus musculus (Mouse)).